The chain runs to 112 residues: Putative pterin-4-alpha-carbinolamine dehydratase (112 aa).

The protein belongs to the pterin-4-alpha-carbinolamine dehydratase family.

The catalysed reaction is (4aS,6R)-4a-hydroxy-L-erythro-5,6,7,8-tetrahydrobiopterin = (6R)-L-erythro-6,7-dihydrobiopterin + H2O. The polypeptide is Putative pterin-4-alpha-carbinolamine dehydratase (Shewanella sp. (strain ANA-3)).